The primary structure comprises 415 residues: UDP-N-acetylglucosamine 1-carboxyvinyltransferase (415 aa).

Residue 22–23 (KN) coordinates phosphoenolpyruvate. Arginine 92 lines the UDP-N-acetyl-alpha-D-glucosamine pocket. Cysteine 116 functions as the Proton donor in the catalytic mechanism. At cysteine 116 the chain carries 2-(S-cysteinyl)pyruvic acid O-phosphothioketal. UDP-N-acetyl-alpha-D-glucosamine-binding positions include 121–125 (RPIDL), aspartate 304, and valine 326.

It belongs to the EPSP synthase family. MurA subfamily.

The protein resides in the cytoplasm. The catalysed reaction is phosphoenolpyruvate + UDP-N-acetyl-alpha-D-glucosamine = UDP-N-acetyl-3-O-(1-carboxyvinyl)-alpha-D-glucosamine + phosphate. It functions in the pathway cell wall biogenesis; peptidoglycan biosynthesis. Its function is as follows. Cell wall formation. Adds enolpyruvyl to UDP-N-acetylglucosamine. The sequence is that of UDP-N-acetylglucosamine 1-carboxyvinyltransferase from Halothermothrix orenii (strain H 168 / OCM 544 / DSM 9562).